An 840-amino-acid chain; its full sequence is Protein argonaute-2 (840 aa).

One can recognise a PAZ domain in the interval 210–329 (PVIEFVCEVL…LPLEVCNIVA (120 aa)). Phosphoserine is present on Ser368. One can recognise a Piwi domain in the interval 498-799 (LVVVILPGKT…VAFRARYHLV (302 aa)). The a divalent metal cation site is built by Asp578 and Asp650. Position 681 is a 4-hydroxyproline (Pro681). His788 contributes to the a divalent metal cation binding site. Ser805, Ser809, Ser812, and Ser815 each carry phosphoserine.

It belongs to the argonaute family. Ago subfamily. In terms of assembly, interacts with DICER1 through its Piwi domain and with TARBP2 during assembly of the RNA-induced silencing complex (RISC). Together, DICER1, AGO2 and TARBP2 constitute the trimeric RISC loading complex (RLC), or micro-RNA (miRNA) loading complex (miRLC). Within the RLC/miRLC, DICER1 and TARBP2 are required to process precursor miRNAs (pre-miRNAs) to mature miRNAs and then load them onto AGO2. AGO2 bound to the mature miRNA constitutes the minimal RISC and may subsequently dissociate from DICER1 and TARBP2. Note however that the term RISC has also been used to describe the trimeric RLC/miRLC. The formation of RISC complexes containing siRNAs rather than miRNAs appears to occur independently of DICER1. Interacts with AGO1. Also interacts with DDB1, DDX5, DDX6, DDX20, DHX30, DHX36, DDX47, DHX9, ELAVL, FXR1, GEMIN4, HNRNPF, IGF2BP1, ILF3, IMP8, MATR3, PABPC1, PRMT5, P4HA1, P4HB, RBM4, SART3, TNRC6A, TNRC6B, UPF1 and YBX1. Interacts with the P-body components DCP1A and XRN1. Associates with polysomes and messenger ribonucleoproteins (mNRPs). Interacts with RBM4; the interaction is modulated under stress-induced conditions, occurs under both cell proliferation and differentiation conditions and in an RNA- and phosphorylation-independent manner. Interacts with LIMD1, WTIP and AJUBA. Interacts with TRIM71; the interaction increases in presence of RNA. Interacts with APOBEC3G in an RNA-dependent manner. Interacts with APOBEC3A, APOBEC3C, APOBEC3F and APOBEC3H. Interacts with DICER1, TARBP2, EIF6, MOV10 and RPL7A (60S ribosome subunit); they form a large RNA-induced silencing complex (RISC). Interacts with FMR1. Interacts with ZFP36. Interacts with RC3H1; the interaction is RNA independent. Found in a complex composed of AGO2, CHD7 and ARB2A. Interacts with SND1 and SYT11. Interacts with CLNK. Interacts with GARRE1. In terms of processing, hydroxylated. 4-hydroxylation appears to enhance protein stability but is not required for miRNA-binding or endonuclease activity. Post-translationally, ubiquitinated on surface-exposed lysines by a SCF-like E3 ubiquitin-protein ligase complex containing ZSWIM8 during target-directed microRNA degradation (TDMD), a process that mediates degradation of microRNAs (miRNAs). Ubiquitination by the SCF-like E3 ubiquitin-protein ligase complex containing ZSWIM8 leads to its subsequent degradation, thereby exposing miRNAs for degradation. ZSWIM8 recognizes and binds AGO2 when it is engaged with a TDMD target. Phosphorylation at Ser-368 by AKT3; leads to up-regulate translational repression of microRNA target and down-regulate endonucleolytic cleavage. In terms of processing, a phosphorylation cycle of C-terminal serine cluster (Ser-805-Ser-815) regulates the release of target mRNAs. Target-binding leads to phosphorylation of these residues by CSNK1A1, which reduces the affinity of AGO2 for mRNA and enables target release. The ANKRD52-PPP6C phosphatase complex dephosphorylates the residues, which primes AGO2 for binding a new target.

It localises to the cytoplasm. The protein localises to the P-body. Its subcellular location is the nucleus. The catalysed reaction is Endonucleolytic cleavage to 5'-phosphomonoester.. Required for RNA-mediated gene silencing (RNAi) by the RNA-induced silencing complex (RISC). The 'minimal RISC' appears to include AGO2 bound to a short guide RNA such as a microRNA (miRNA) or short interfering RNA (siRNA). These guide RNAs direct RISC to complementary mRNAs that are targets for RISC-mediated gene silencing. The precise mechanism of gene silencing depends on the degree of complementarity between the miRNA or siRNA and its target. Binding of RISC to a perfectly complementary mRNA generally results in silencing due to endonucleolytic cleavage of the mRNA specifically by AGO2. Binding of RISC to a partially complementary mRNA results in silencing through inhibition of translation, and this is independent of endonuclease activity. May inhibit translation initiation by binding to the 7-methylguanosine cap, thereby preventing the recruitment of the translation initiation factor eIF4-E. May also inhibit translation initiation via interaction with EIF6, which itself binds to the 60S ribosomal subunit and prevents its association with the 40S ribosomal subunit. The inhibition of translational initiation leads to the accumulation of the affected mRNA in cytoplasmic processing bodies (P-bodies), where mRNA degradation may subsequently occur. In some cases RISC-mediated translational repression is also observed for miRNAs that perfectly match the 3' untranslated region (3'-UTR). Can also up-regulate the translation of specific mRNAs under certain growth conditions. Binds to the AU element of the 3'-UTR of the TNF (TNF-alpha) mRNA and up-regulates translation under conditions of serum starvation. Also required for transcriptional gene silencing (TGS), in which short RNAs known as antigene RNAs or agRNAs direct the transcriptional repression of complementary promoter regions. The protein is Protein argonaute-2 (AGO2) of Oryctolagus cuniculus (Rabbit).